The following is a 441-amino-acid chain: Maltose-6'-phosphate glucosidase MalH (441 aa).

4–70 (FSVVIAGGGS…PEIEFLATTN (67 aa)) lines the NAD(+) pocket. 2 residues coordinate substrate: Arg-93 and Asn-147. Cys-169 is a binding site for Mn(2+). Asp-170 acts as the Proton donor in catalysis. A Mn(2+)-binding site is contributed by His-200. Tyr-264 (proton acceptor) is an active-site residue. Position 284 (Arg-284) interacts with substrate.

Homotetramer. Requires NAD(+) as cofactor. Mn(2+) is required as a cofactor.

It carries out the reaction alpha-maltose 6'-phosphate + H2O = D-glucose 6-phosphate + D-glucose. Its function is as follows. Catalyzes the hydrolysis of O-alpha-linked disaccharide 6-phosphates, including maltose-6'P and all five phosphorylated isomers of sucrose, but not sucrose-6P. Does not hydrolyze beta-linked disaccharide 6-phosphates such as cellobiose-6'P and gentiobiose-6'P. Is involved in the dissimilation of maltose and related O-alpha-linked glucosides produced via the phosphoenolpyruvate-dependent sugar phosphotransferase system (PEP-PTS). The polypeptide is Maltose-6'-phosphate glucosidase MalH (malH) (Clostridium acetobutylicum (strain ATCC 824 / DSM 792 / JCM 1419 / IAM 19013 / LMG 5710 / NBRC 13948 / NRRL B-527 / VKM B-1787 / 2291 / W)).